Here is a 378-residue protein sequence, read N- to C-terminus: Spermidine/putrescine import ATP-binding protein PotA (378 aa).

The region spanning 18–248 (VQLAGIRKCF…PKNLFVAGFI (231 aa)) is the ABC transporter domain. 50 to 57 (GPSGCGKT) lines the ATP pocket.

Belongs to the ABC transporter superfamily. Spermidine/putrescine importer (TC 3.A.1.11.1) family. The complex is composed of two ATP-binding proteins (PotA), two transmembrane proteins (PotB and PotC) and a solute-binding protein (PotD).

It is found in the cell inner membrane. It carries out the reaction ATP + H2O + polyamine-[polyamine-binding protein]Side 1 = ADP + phosphate + polyamineSide 2 + [polyamine-binding protein]Side 1.. In terms of biological role, part of the ABC transporter complex PotABCD involved in spermidine/putrescine import. Responsible for energy coupling to the transport system. This chain is Spermidine/putrescine import ATP-binding protein PotA, found in Shigella dysenteriae serotype 1 (strain Sd197).